The sequence spans 552 residues: CCR4-NOT transcription complex subunit 6 (552 aa).

LRR repeat units lie at residues 52–73, 75–96, 98–120, and 121–143; these read HLTA…IAKL, NLVY…LGNM, SLRE…GKLF, and QLQT…CLEP. The interval 153-552 is nuclease domain; that stretch reads LLDNLSVSTE…VNGIHLPGRR (400 aa). Glu235 contacts Mg(2+). The substrate site is built by Glu235, Glu271, His356, and Pro361. Residue Asp407 participates in Mg(2+) binding. The Proton donor/acceptor role is filled by Asp407. Residues Asn409, Asn476, and Phe481 each contribute to the substrate site.

It belongs to the CCR4/nocturin family. In terms of assembly, subunit of the CCR4-NOT core complex. Mg(2+) is required as a cofactor.

The protein resides in the cytoplasm. The protein localises to the nucleus. The enzyme catalyses Exonucleolytic cleavage of poly(A) to 5'-AMP.. Poly(A) nuclease involved in mRNA decay. Has 3'-5' RNase activity. The CCR4-NOT complex functions as a general transcription regulation complex. Enhances ligand-dependent transcriptional activity of nuclear hormone receptors. This chain is CCR4-NOT transcription complex subunit 6 (cnot6), found in Xenopus laevis (African clawed frog).